A 363-amino-acid chain; its full sequence is Succinyl-diaminopimelate desuccinylase (363 aa).

His63 contacts Zn(2+). Asp65 is a catalytic residue. Position 94 (Asp94) interacts with Zn(2+). The active-site Proton acceptor is Glu123. 3 residues coordinate Zn(2+): Glu124, Glu152, and His337.

It belongs to the peptidase M20A family. DapE subfamily. Homodimer. The cofactor is Zn(2+). Co(2+) serves as cofactor.

It catalyses the reaction N-succinyl-(2S,6S)-2,6-diaminopimelate + H2O = (2S,6S)-2,6-diaminopimelate + succinate. It participates in amino-acid biosynthesis; L-lysine biosynthesis via DAP pathway; LL-2,6-diaminopimelate from (S)-tetrahydrodipicolinate (succinylase route): step 3/3. Functionally, catalyzes the hydrolysis of N-succinyl-L,L-diaminopimelic acid (SDAP), forming succinate and LL-2,6-diaminopimelate (DAP), an intermediate involved in the bacterial biosynthesis of lysine and meso-diaminopimelic acid, an essential component of bacterial cell walls. In Campylobacter concisus (strain 13826), this protein is Succinyl-diaminopimelate desuccinylase.